We begin with the raw amino-acid sequence, 46 residues long: Endochitinase 3 (46 aa).

The segment at 1–21 is disordered; that stretch reads MTPQGNKPSSHDVITGRWTPS.

It belongs to the glycosyl hydrolase 19 family. Chitinase class I subfamily.

The catalysed reaction is Random endo-hydrolysis of N-acetyl-beta-D-glucosaminide (1-&gt;4)-beta-linkages in chitin and chitodextrins.. In terms of biological role, defense against chitin-containing fungal and bacterial pathogens. This Arachis hypogaea (Peanut) protein is Endochitinase 3.